A 418-amino-acid chain; its full sequence is Histidine--tRNA ligase (418 aa).

The protein belongs to the class-II aminoacyl-tRNA synthetase family. As to quaternary structure, homodimer.

It is found in the cytoplasm. It carries out the reaction tRNA(His) + L-histidine + ATP = L-histidyl-tRNA(His) + AMP + diphosphate + H(+). The polypeptide is Histidine--tRNA ligase (Dehalococcoides mccartyi (strain ATCC BAA-2100 / JCM 16839 / KCTC 5957 / BAV1)).